The following is a 174-amino-acid chain: uncharacterized protein (174 aa).

This is an uncharacterized protein from Rickettsia conorii (strain ATCC VR-613 / Malish 7).